Consider the following 594-residue polypeptide: Aspartate--tRNA(Asp/Asn) ligase (594 aa).

An L-aspartate-binding site is contributed by E175. Positions 199 to 202 (QIYK) are aspartate. R221 and H454 together coordinate L-aspartate. 221-223 (RDE) provides a ligand contact to ATP. E488 contributes to the ATP binding site. R495 provides a ligand contact to L-aspartate. 540-543 (GIDR) lines the ATP pocket.

Belongs to the class-II aminoacyl-tRNA synthetase family. Type 1 subfamily. As to quaternary structure, homodimer.

The protein resides in the cytoplasm. The catalysed reaction is tRNA(Asx) + L-aspartate + ATP = L-aspartyl-tRNA(Asx) + AMP + diphosphate. Its function is as follows. Aspartyl-tRNA synthetase with relaxed tRNA specificity since it is able to aspartylate not only its cognate tRNA(Asp) but also tRNA(Asn). Reaction proceeds in two steps: L-aspartate is first activated by ATP to form Asp-AMP and then transferred to the acceptor end of tRNA(Asp/Asn). The polypeptide is Aspartate--tRNA(Asp/Asn) ligase (Chelativorans sp. (strain BNC1)).